Here is a 544-residue protein sequence, read N- to C-terminus: Membrane protein insertase YidC (544 aa).

5 consecutive transmembrane segments (helical) span residues 15–35 (LFLIGLFMLINDIFSSIMLSF), 321–341 (LWYLIQVPMQMVMQVFYDVIP), 343–363 (WGLSIIFLTIVVRILIFPLTF), 409–429 (LGGCFPVILQLPIFFALYSLV), and 506–526 (MPIMFFFILYNMPSGLLIYWI).

Belongs to the OXA1/ALB3/YidC family. Type 1 subfamily. As to quaternary structure, interacts with the Sec translocase complex via SecD. Specifically interacts with transmembrane segments of nascent integral membrane proteins during membrane integration.

It localises to the cell inner membrane. In terms of biological role, required for the insertion and/or proper folding and/or complex formation of integral membrane proteins into the membrane. Involved in integration of membrane proteins that insert both dependently and independently of the Sec translocase complex, as well as at least some lipoproteins. Aids folding of multispanning membrane proteins. This is Membrane protein insertase YidC from Borrelia garinii subsp. bavariensis (strain ATCC BAA-2496 / DSM 23469 / PBi) (Borreliella bavariensis).